The chain runs to 60 residues: UPF0434 protein Pnap_1922 (60 aa).

Belongs to the UPF0434 family.

The polypeptide is UPF0434 protein Pnap_1922 (Polaromonas naphthalenivorans (strain CJ2)).